The primary structure comprises 130 residues: Fluoride-specific ion channel FluC (130 aa).

4 consecutive transmembrane segments (helical) span residues 3–23, 38–58, 67–87, and 102–122; these read FVFLWAALGGAIGSSLRYFVG, LGTFSVNIIGCFVIGFMGHLA, FGIFFVTGVLGGFTTFSSYGL, and ISYVLGTNLLGLIGVAIGWFL. Glycine 77 and threonine 80 together coordinate Na(+).

This sequence belongs to the fluoride channel Fluc/FEX (TC 1.A.43) family.

It is found in the cell inner membrane. The enzyme catalyses fluoride(in) = fluoride(out). Na(+) is not transported, but it plays an essential structural role and its presence is essential for fluoride channel function. Fluoride-specific ion channel. Important for reducing fluoride concentration in the cell, thus reducing its toxicity. This is Fluoride-specific ion channel FluC from Helicobacter pylori (strain G27).